Here is a 536-residue protein sequence, read N- to C-terminus: Nuclear hormone receptor family member nhr-7 (536 aa).

Residues 6–82 (NRICAVCGDT…VGMNPDYVRP (77 aa)) constitute a DNA-binding region (nuclear receptor). NR C4-type zinc fingers lie at residues 9–29 (CAVC…CFGC) and 46–70 (CRFE…FRKC). An NR LBD domain is found at 155 to 378 (ADRSLARKTG…PFHKILTDII (224 aa)). Positions 427 to 465 (SPCQISAPPPPQQQYTDYSQMPSTSSYPANSSPFQSPYR) are disordered. A compositionally biased stretch (polar residues) spans 439–465 (QQYTDYSQMPSTSSYPANSSPFQSPYR).

It belongs to the nuclear hormone receptor family.

The protein localises to the nucleus. Its function is as follows. Orphan nuclear receptor. The protein is Nuclear hormone receptor family member nhr-7 (nhr-7) of Caenorhabditis elegans.